A 314-amino-acid polypeptide reads, in one-letter code: tRNA uridine(34) hydroxylase (314 aa).

Positions 140–234 constitute a Rhodanese domain; the sequence is SRDDVILVDT…YLEETPAEES (95 aa). The active-site Cysteine persulfide intermediate is the cysteine 194.

It belongs to the TrhO family.

The catalysed reaction is uridine(34) in tRNA + AH2 + O2 = 5-hydroxyuridine(34) in tRNA + A + H2O. Functionally, catalyzes oxygen-dependent 5-hydroxyuridine (ho5U) modification at position 34 in tRNAs. This chain is tRNA uridine(34) hydroxylase, found in Acinetobacter baylyi (strain ATCC 33305 / BD413 / ADP1).